The following is an 85-amino-acid chain: Acyl carrier protein (85 aa).

The region spanning Ser-2 to Ala-78 is the Carrier domain. Ser-37 carries the post-translational modification O-(pantetheine 4'-phosphoryl)serine.

It belongs to the acyl carrier protein (ACP) family. 4'-phosphopantetheine is transferred from CoA to a specific serine of apo-ACP by AcpS. This modification is essential for activity because fatty acids are bound in thioester linkage to the sulfhydryl of the prosthetic group.

It is found in the cytoplasm. The protein operates within lipid metabolism; fatty acid biosynthesis. Its function is as follows. Carrier of the growing fatty acid chain in fatty acid biosynthesis. The polypeptide is Acyl carrier protein (Azobacteroides pseudotrichonymphae genomovar. CFP2).